A 547-amino-acid chain; its full sequence is Chaperonin GroEL 1 (547 aa).

Residues Thr30–Pro33, Lys51, Asp87–Thr91, Gly415, and Asp496 contribute to the ATP site.

It belongs to the chaperonin (HSP60) family. As to quaternary structure, forms a cylinder of 14 subunits composed of two heptameric rings stacked back-to-back. Interacts with the co-chaperonin GroES.

The protein resides in the cytoplasm. The enzyme catalyses ATP + H2O + a folded polypeptide = ADP + phosphate + an unfolded polypeptide.. Its function is as follows. Together with its co-chaperonin GroES, plays an essential role in assisting protein folding. The GroEL-GroES system forms a nano-cage that allows encapsulation of the non-native substrate proteins and provides a physical environment optimized to promote and accelerate protein folding. The polypeptide is Chaperonin GroEL 1 (Rhodopseudomonas palustris (strain BisB18)).